The chain runs to 98 residues: NADH-ubiquinone oxidoreductase chain 4L (98 aa).

3 helical membrane passes run 1–21, 29–49, and 59–79; these read MTTMFFNLLLAFMVALMGVYI, TLLCLEGMMLSIFIMVSLTLL, and FPLILLVFSACEAGVGLALLV.

It belongs to the complex I subunit 4L family. Core subunit of respiratory chain NADH dehydrogenase (Complex I) which is composed of 45 different subunits.

The protein resides in the mitochondrion inner membrane. The enzyme catalyses a ubiquinone + NADH + 5 H(+)(in) = a ubiquinol + NAD(+) + 4 H(+)(out). Its function is as follows. Core subunit of the mitochondrial membrane respiratory chain NADH dehydrogenase (Complex I) which catalyzes electron transfer from NADH through the respiratory chain, using ubiquinone as an electron acceptor. Part of the enzyme membrane arm which is embedded in the lipid bilayer and involved in proton translocation. This chain is NADH-ubiquinone oxidoreductase chain 4L (MT-ND4L), found in Zaglossus bruijni (Western long-beaked echidna).